The chain runs to 137 residues: Large ribosomal subunit protein uL16 (137 aa).

The protein belongs to the universal ribosomal protein uL16 family. As to quaternary structure, part of the 50S ribosomal subunit.

In terms of biological role, binds 23S rRNA and is also seen to make contacts with the A and possibly P site tRNAs. The chain is Large ribosomal subunit protein uL16 from Psychrobacter arcticus (strain DSM 17307 / VKM B-2377 / 273-4).